The primary structure comprises 103 residues: Small ribosomal subunit protein uS10 (103 aa).

This sequence belongs to the universal ribosomal protein uS10 family. As to quaternary structure, part of the 30S ribosomal subunit.

Involved in the binding of tRNA to the ribosomes. The polypeptide is Small ribosomal subunit protein uS10 (Jannaschia sp. (strain CCS1)).